A 487-amino-acid chain; its full sequence is Iron-sulfur cluster assembly SufBD family protein ycf24 (487 aa).

It belongs to the iron-sulfur cluster assembly SufBD family.

Its subcellular location is the plastid. The protein resides in the chloroplast. In Porphyra purpurea (Red seaweed), this protein is Iron-sulfur cluster assembly SufBD family protein ycf24 (ycf24).